A 488-amino-acid polypeptide reads, in one-letter code: Protein nucleotidyltransferase YdiU (488 aa).

Positions 91, 93, 94, 114, 126, 127, 177, and 184 each coordinate ATP. Residues 108–127 (RFDIQLKGSGPTPYSRRGDG) are disordered. Residue Asp253 is the Proton acceptor of the active site. Asn254 and Asp263 together coordinate Mg(2+). Asp263 provides a ligand contact to ATP.

The protein belongs to the SELO family. Requires Mg(2+) as cofactor. The cofactor is Mn(2+).

It carries out the reaction L-seryl-[protein] + ATP = 3-O-(5'-adenylyl)-L-seryl-[protein] + diphosphate. It catalyses the reaction L-threonyl-[protein] + ATP = 3-O-(5'-adenylyl)-L-threonyl-[protein] + diphosphate. The enzyme catalyses L-tyrosyl-[protein] + ATP = O-(5'-adenylyl)-L-tyrosyl-[protein] + diphosphate. The catalysed reaction is L-histidyl-[protein] + UTP = N(tele)-(5'-uridylyl)-L-histidyl-[protein] + diphosphate. It carries out the reaction L-seryl-[protein] + UTP = O-(5'-uridylyl)-L-seryl-[protein] + diphosphate. It catalyses the reaction L-tyrosyl-[protein] + UTP = O-(5'-uridylyl)-L-tyrosyl-[protein] + diphosphate. Functionally, nucleotidyltransferase involved in the post-translational modification of proteins. It can catalyze the addition of adenosine monophosphate (AMP) or uridine monophosphate (UMP) to a protein, resulting in modifications known as AMPylation and UMPylation. The polypeptide is Protein nucleotidyltransferase YdiU (Bacillus anthracis (strain A0248)).